Here is a 351-residue protein sequence, read N- to C-terminus: Magnesium-protoporphyrin IX monomethyl ester [oxidative] cyclase 1 (351 aa).

It belongs to the AcsF family. Fe cation serves as cofactor.

It carries out the reaction Mg-protoporphyrin IX 13-monomethyl ester + 3 NADPH + 3 O2 + 2 H(+) = 3,8-divinyl protochlorophyllide a + 3 NADP(+) + 5 H2O. Its pathway is porphyrin-containing compound metabolism; chlorophyll biosynthesis (light-independent). In terms of biological role, catalyzes the formation of the isocyclic ring in chlorophyll biosynthesis. Mediates the cyclase reaction, which results in the formation of divinylprotochlorophyllide (Pchlide) characteristic of all chlorophylls from magnesium-protoporphyrin IX 13-monomethyl ester (MgPMME). In Nostoc sp. (strain PCC 7120 / SAG 25.82 / UTEX 2576), this protein is Magnesium-protoporphyrin IX monomethyl ester [oxidative] cyclase 1.